A 215-amino-acid polypeptide reads, in one-letter code: Small ribosomal subunit protein eS1 (215 aa).

It belongs to the eukaryotic ribosomal protein eS1 family.

This Halorubrum lacusprofundi (strain ATCC 49239 / DSM 5036 / JCM 8891 / ACAM 34) protein is Small ribosomal subunit protein eS1.